Here is a 181-residue protein sequence, read N- to C-terminus: Photosystem I assembly protein Ycf4 (181 aa).

Helical transmembrane passes span 19-41 (YFWAVFLCSGGISFLLAGISSYF) and 61-83 (LVMSFYGTLSIALAIYILGTLFW).

This sequence belongs to the Ycf4 family.

The protein localises to the plastid. It localises to the chloroplast thylakoid membrane. Functionally, seems to be required for the assembly of the photosystem I complex. This Trieres chinensis (Marine centric diatom) protein is Photosystem I assembly protein Ycf4.